We begin with the raw amino-acid sequence, 321 residues long: Cytochrome c biogenesis protein CcsA (321 aa).

The next 8 membrane-spanning stretches (helical) occupy residues 17–37 (VVSI…IIGL), 46–63 (MTTF…WIYL), 71–91 (LYES…VPYF), 98–118 (LKAI…SGLL), 143–163 (MVLG…LLVI), 225–245 (IISL…VWAN), 259–273 (TWAF…IYLH), and 286–306 (AIVA…VNLL).

Belongs to the CcmF/CycK/Ccl1/NrfE/CcsA family. In terms of assembly, may interact with Ccs1.

The protein resides in the plastid. It is found in the chloroplast thylakoid membrane. In terms of biological role, required during biogenesis of c-type cytochromes (cytochrome c6 and cytochrome f) at the step of heme attachment. The sequence is that of Cytochrome c biogenesis protein CcsA from Morus indica (Mulberry).